The chain runs to 139 residues: uncharacterized protein (139 aa).

This is an uncharacterized protein from Invertebrate iridescent virus 3 (IIV-3).